The sequence spans 628 residues: Basal cell adhesion molecule (628 aa).

Positions 1–31 (MEPPDAPAQARGAPRLLLLAVLLAAHPDAQA) are cleaved as a signal peptide. 2 Ig-like V-type domains span residues 32–142 (EVRL…ARLN) and 147–257 (PEAT…PTFH). Over 32–547 (EVRLSVPPLV…GTVSPQTSQA (516 aa)) the chain is Extracellular. Intrachain disulfides connect cysteine 53–cysteine 125, cysteine 172–cysteine 237, and cysteine 291–cysteine 337. Ig-like C2-type domains follow at residues 274-355 (PSTP…KTLE), 363-441 (PLEL…QNFT), and 448-541 (PELK…GTVS). The tract at residues 309–312 (EQEE) is interaction with laminin alpha5. Asparagine 321, asparagine 377, asparagine 383, asparagine 419, and asparagine 439 each carry an N-linked (GlcNAc...) asparagine glycan. A disulfide bridge connects residues cysteine 384 and cysteine 424. A disulfide bridge links cysteine 473 with cysteine 522. A helical transmembrane segment spans residues 548–568 (GVAVMAVAVSVGLLLLVVAVF). Topologically, residues 569–628 (YCVRRKGGPCCRQRREKGAPPPGEPGLSHSGSEQPEQTGLLMGGASGGARGGSGGFGDEC) are cytoplasmic. Residues 579 to 628 (CRQRREKGAPPPGEPGLSHSGSEQPEQTGLLMGGASGGARGGSGGFGDEC) form a disordered region. Serine 596 carries the phosphoserine; by GSK3 modification. The residue at position 598 (serine 598) is a Phosphoserine; by CK2. At serine 600 the chain carries Phosphoserine. Positions 609 to 628 (LMGGASGGARGGSGGFGDEC) are enriched in gly residues. Residue serine 621 is modified to Phosphoserine; by PKA or PKB/AKT1.

As to quaternary structure, homodimer. Interacts with ITGA4:ITGB1. Interacts with spectrins SPTA1 and SPTB1. Post-translationally, epinephrine-stimulated phosphorylation of Ser-621 by PKA enhances adhesion to laminin. Ser-621 can also be phosphorylated by AKT1. As to expression, wide tissue distribution (highest in the pancreas and very low in brain). Closely associated with the basal layer of cells in epithelia and the endothelium of blood vessel walls.

The protein resides in the cell membrane. Its function is as follows. Transmembrane glycoprotein that functions as both a receptor and an adhesion molecule playing a crucial role in cell adhesion, motility, migration and invasion. Extracellular domain enables binding to extracellular matrix proteins, such as laminin, integrin and other ligands while its intracellular domain interacts with cytoskeletal proteins like hemoglobin, facilitating cell signal transduction. Serves as a receptor for laminin alpha-5/LAMA5 to promote cell adhesion. Mechanistically, JAK2 induces BCAM phosphorylation and activates its adhesion to laminin by stimulating a Rap1/AKT signaling pathway in the absence of EPOR. This Homo sapiens (Human) protein is Basal cell adhesion molecule (BCAM).